A 321-amino-acid polypeptide reads, in one-letter code: MKIILAIASLLVLSAVYARPASIKTFEEFKKAFNKTYATPEKEEVARKNFLESLKYVESNKGAINHLSDLSLDEFKNQFLMNANAFEQLKTQFDLNAETYACSINSVSLPSELDLRSLRTVTPIRMQGGCGSCWAFSGVASTESAYLAYRNMSLDLAEQELVDCASQNGCHGDTIPRGIEYIQQNGVVQEHYYPYVAREQSCHRPNAQRYGLKNYCQISPPDSNKIRQALTQTHTAVAVIIGIKDLNAFRHYDGRTIMQHDNGYQPNYHAVNIVGYGNTQGVDYWIVRNSWDTTWGDNGYGYFAANINLMMIEQYPYVVML.

Residues 1–18 (MKIILAIASLLVLSAVYA) form the signal peptide. The propeptide occupies 19-98 (RPASIKTFEE…LKTQFDLNAE (80 aa)). Residue Asn-34 is glycosylated (N-linked (GlcNAc...) asparagine). An intrachain disulfide couples Cys-130 to Cys-170. Cys-133 is an active-site residue. Asn-151 is a glycosylation site (N-linked (GlcNAc...) asparagine). Active-site residues include His-269 and Asn-289.

It belongs to the peptidase C1 family.

Its subcellular location is the secreted. It carries out the reaction Broad endopeptidase specificity.. Its function is as follows. Probable thiol protease. The polypeptide is Peptidase 1 (EURM1) (Euroglyphus maynei (Mayne's house dust mite)).